Here is a 392-residue protein sequence, read N- to C-terminus: Probable glucan endo-1,6-beta-glucosidase B (392 aa).

An N-terminal signal peptide occupies residues 1 to 18 (MKVTRLAVLNTLATLTVA). Residue Asn31 is glycosylated (N-linked (GlcNAc...) asparagine). The active-site Proton donor is Glu220. The Nucleophile role is filled by Glu322.

It belongs to the glycosyl hydrolase 5 (cellulase A) family.

It localises to the secreted. The catalysed reaction is Random hydrolysis of (1-&gt;6)-linkages in (1-&gt;6)-beta-D-glucans.. Functionally, beta-glucanases participate in the metabolism of beta-glucan, the main structural component of the cell wall. Acts on lutean, pustulan and 1,6-oligo-beta-D-glucosides. This Aspergillus flavus (strain ATCC 200026 / FGSC A1120 / IAM 13836 / NRRL 3357 / JCM 12722 / SRRC 167) protein is Probable glucan endo-1,6-beta-glucosidase B (exgB).